The primary structure comprises 324 residues: Methenyltetrahydromethanopterin cyclohydrolase (324 aa).

This sequence belongs to the MCH family.

The protein localises to the cytoplasm. It catalyses the reaction 5,10-methenyl-5,6,7,8-tetrahydromethanopterin + H2O = N(5)-formyl-5,6,7,8-tetrahydromethanopterin + H(+). It participates in one-carbon metabolism; formaldehyde degradation; formate from formaldehyde (H(4)MPT route): step 3/5. In terms of biological role, catalyzes the hydrolysis of methenyl-H(4)MPT(+) to 5-formyl-H(4)MPT. The sequence is that of Methenyltetrahydromethanopterin cyclohydrolase from Methylobacterium nodulans (strain LMG 21967 / CNCM I-2342 / ORS 2060).